The chain runs to 401 residues: Dual-specificity RNA methyltransferase RlmN (401 aa).

E114 serves as the catalytic Proton acceptor. Residues 120–365 (DKGRGTLCVS…TMVRRTRGDD (246 aa)) form the Radical SAM core domain. Cysteines 127 and 370 form a disulfide. [4Fe-4S] cluster is bound by residues C134, C138, and C141. S-adenosyl-L-methionine contacts are provided by residues 187-188 (GE), S219, 241-243 (SLH), and N327. C370 serves as the catalytic S-methylcysteine intermediate.

The protein belongs to the radical SAM superfamily. RlmN family. It depends on [4Fe-4S] cluster as a cofactor.

It localises to the cytoplasm. The catalysed reaction is adenosine(2503) in 23S rRNA + 2 reduced [2Fe-2S]-[ferredoxin] + 2 S-adenosyl-L-methionine = 2-methyladenosine(2503) in 23S rRNA + 5'-deoxyadenosine + L-methionine + 2 oxidized [2Fe-2S]-[ferredoxin] + S-adenosyl-L-homocysteine. The enzyme catalyses adenosine(37) in tRNA + 2 reduced [2Fe-2S]-[ferredoxin] + 2 S-adenosyl-L-methionine = 2-methyladenosine(37) in tRNA + 5'-deoxyadenosine + L-methionine + 2 oxidized [2Fe-2S]-[ferredoxin] + S-adenosyl-L-homocysteine. Its function is as follows. Specifically methylates position 2 of adenine 2503 in 23S rRNA and position 2 of adenine 37 in tRNAs. m2A2503 modification seems to play a crucial role in the proofreading step occurring at the peptidyl transferase center and thus would serve to optimize ribosomal fidelity. In Xanthomonas campestris pv. campestris (strain B100), this protein is Dual-specificity RNA methyltransferase RlmN.